The chain runs to 361 residues: Phospho-N-acetylmuramoyl-pentapeptide-transferase (361 aa).

10 consecutive transmembrane segments (helical) span residues 28–48, 74–94, 99–119, 133–153, 168–188, 203–223, 236–256, 263–283, 288–308, and 338–358; these read LAII…IKFL, TMGG…LADL, IWIT…DDYA, SKLV…EYLD, LNLD…VGSS, VPIA…GNLI, TGEL…FLWF, VFMG…ISVI, IVLA…ILQV, and KVVI…LSSL.

Belongs to the glycosyltransferase 4 family. MraY subfamily. Mg(2+) is required as a cofactor.

The protein localises to the cell inner membrane. It catalyses the reaction UDP-N-acetyl-alpha-D-muramoyl-L-alanyl-gamma-D-glutamyl-meso-2,6-diaminopimeloyl-D-alanyl-D-alanine + di-trans,octa-cis-undecaprenyl phosphate = di-trans,octa-cis-undecaprenyl diphospho-N-acetyl-alpha-D-muramoyl-L-alanyl-D-glutamyl-meso-2,6-diaminopimeloyl-D-alanyl-D-alanine + UMP. The protein operates within cell wall biogenesis; peptidoglycan biosynthesis. Its function is as follows. Catalyzes the initial step of the lipid cycle reactions in the biosynthesis of the cell wall peptidoglycan: transfers peptidoglycan precursor phospho-MurNAc-pentapeptide from UDP-MurNAc-pentapeptide onto the lipid carrier undecaprenyl phosphate, yielding undecaprenyl-pyrophosphoryl-MurNAc-pentapeptide, known as lipid I. The sequence is that of Phospho-N-acetylmuramoyl-pentapeptide-transferase from Rickettsia akari (strain Hartford).